The primary structure comprises 443 residues: MRVLLTSFALDAHFNGSVPLAWALRAAGHEVRVASQPALTASITAAGLTAVPVGADPRLDEMVKGVGDAVLSHHADQSLDADTPGQLTPAFLQGWDTMMTATFYTLINDDPMVDDLVAFARGWEPDLILWEPFTFAGAVAAKVTGAAHARLLSFPDLFMSMRRAYLAQLGAAPAGPAGGNGTTHPDDSLGQWLEWTLGRYGVPFDEEAVTGQWSVDQVPRSFRPPSDRPVVGMRYVPYNGPGPAVVPDWLRVPPTRPRVCVTLGMTARTSEFPNAVPVDLVLKAVEGLDIEVVATLDAEERALLTHVPDNVRLVDHVPLHALLPTCAAIVHHGGAGTWSTALVEGVPQIAMGWIWDAIDRAQRQQALGAGLHLPSHEVTVEGLRGRLVRLLDEPSFTAAAARLRAEAESEPTPAQVVPVLERLTAQHRAREPRRPGGTSPCVS.

Residues 1–23 form the signal peptide; the sequence is MRVLLTSFALDAHFNGSVPLAWA.

The protein belongs to the glycosyltransferase 28 family.

The enzyme catalyses dTDP-beta-L-rhodosamine + aklavinone = aclacinomycin T + dTDP + 2 H(+). Its activity is regulated as follows. The activity of AknS is substantially increased by the addition of the accessory protein AknT. Functionally, involved in the biosynthesis of the anthracycline antitumor agent aclacinomycin A. Catalyzes the transfer of the proximal deoxyhexose, L-rhodosamine, from dTDP-beta-L-rhodosamine to the C7-OH of aklavinone aglycone to yield aclacinomycin T (rhodosaminyl-aklavinone). It can also use dTDP-2-deoxy-beta-L-fucose, TDP-2-deoxyfucose, dTDP-4-amino-2-deoxyrhamnose, TDP-L-rhodosamine as sugar donor and epsilon-rhodomycinone as sugar acceptor. This Streptomyces galilaeus protein is Aklavinone 7-beta-L-rhodosaminyltransferase.